We begin with the raw amino-acid sequence, 756 residues long: Amine oxidase [copper-containing] 2 (756 aa).

Over 1–4 (MHLK) the chain is Cytoplasmic. Residues 5-25 (IVLAFLALSLITIFALAYVLL) traverse the membrane as a helical segment. The Extracellular portion of the chain corresponds to 26 to 756 (TSPGGSSQPP…DLPPFSYHGF (731 aa)). N-linked (GlcNAc...) asparagine glycosylation is found at Asn-133, Asn-198, and Asn-226. Asp-380 functions as the Proton acceptor in the catalytic mechanism. The cysteines at positions 398 and 424 are disulfide-linked. The Schiff-base intermediate with substrate; via topaquinone role is filled by Tyr-465. Tyr-465 carries the post-translational modification 2',4',5'-topaquinone. Cu(2+)-binding residues include His-516 and His-518. 7 residues coordinate Ca(2+): Asp-525, Leu-526, Asp-527, Glu-568, Glu-637, Phe-659, and Asn-661. Residue Asn-662 is glycosylated (N-linked (GlcNAc...) asparagine). Ca(2+)-binding residues include Glu-663, Asp-669, and Leu-670. A Cu(2+)-binding site is contributed by His-680. The cysteines at positions 730 and 737 are disulfide-linked.

The protein belongs to the copper/topaquinone oxidase family. Homodimer; disulfide-linked. Probably forms heterodimers with AOC3. The cofactor is Cu(2+). It depends on Ca(2+) as a cofactor. Requires L-topaquinone as cofactor. Topaquinone (TPQ) is generated by copper-dependent autoxidation of a specific tyrosyl residue. As to expression, expressed in many tissues including adipocytes with higher expression in retina where it is active. Not expressed in testis. In terms of tissue distribution, not expressed in thymus.

The protein resides in the cell membrane. The protein localises to the cytoplasm. It catalyses the reaction 2-phenylethylamine + O2 + H2O = 2-phenylacetaldehyde + H2O2 + NH4(+). The enzyme catalyses tryptamine + O2 + H2O = indole-3-acetaldehyde + H2O2 + NH4(+). It carries out the reaction tyramine + O2 + H2O = (4-hydroxyphenyl)acetaldehyde + H2O2 + NH4(+). Its function is as follows. Catalyzes the oxidative deamination of primary amines to the corresponding aldehydes with the concomitant production of hydrogen peroxide and ammonia. Has a preference for 2-phenylethylamine, tryptamine and tyramine. Could also act on methylamine and benzylamine but much less efficiently. The chain is Amine oxidase [copper-containing] 2 from Homo sapiens (Human).